Consider the following 1222-residue polypeptide: Probable disease resistance protein At5g45510 (1222 aa).

Residue 49-56 (GEAGIGKT) coordinates ATP. Residues 122–183 (GERDEDEEEE…KLEAEKKLVD (62 aa)) are a coiled coil. Composition is skewed to basic and acidic residues over residues 171–205 (AAEKLEAEKKLVDPAAKKAKDHGNKNPTDAAKEKT), 212–224 (GEDKAQTSSERKP), 263–279 (RRQETEEATKSGEHAEG), and 286–322 (SGEKKEDTDGEDEIRSADKEEPESQARVKTEEKHEKV). 2 disordered regions span residues 171 to 225 (AAEK…RKPY) and 263 to 327 (RRQE…PPTI). Position 293 is a phosphothreonine (Thr-293). LRR repeat units follow at residues 654–676 (LLRVLIIRDCDLLKSIEELKALT), 677–699 (KLNTLEVSGASSLSKISEKFFES), 702–724 (ELRSLHLSGLKIESSPPSISGLK), 725–747 (ELHCLIIKDCPLLQDLPNIQELV), 785–806 (KLQHLDFSGSQIERLPIFQDSA), 813–835 (SLTRLLLRNCSKLRRLPSLKPLS), 836–856 (GLQILDLSGTTSLVEMLEVCF), 861–883 (ELKTLNLSGTNLSELATTIEDLS), 884–906 (SLNELLLRDCINLDAIPNIEKLE), 907–929 (NLEVIDVSGSAKLAKIEGSFEKM), and 931–951 (YLRVVDLSGTQVETPELPADT).

It belongs to the disease resistance NB-LRR family.

Functionally, probable disease resistance protein. This Arabidopsis thaliana (Mouse-ear cress) protein is Probable disease resistance protein At5g45510.